Reading from the N-terminus, the 173-residue chain is Thiol-disulfide oxidoreductase ResA (173 aa).

A helical; Signal-anchor for type II membrane protein membrane pass occupies residues 10 to 29 (VIILLILSGAVGFTLYQGFF). The Thioredoxin domain occupies 35-173 (MQIGKEAPNF…LEGYLKKITP (139 aa)). C73 and C76 are oxidised to a cystine.

This sequence belongs to the thioredoxin family. ResA subfamily.

Its subcellular location is the cell membrane. The protein operates within protein modification; cytochrome c assembly. In terms of biological role, thiol-disulfide oxidoreductase which is required in disulfide reduction during c-type cytochrome synthesis. May accept reducing equivalents from CcdA, leading to breakage of disulfide bonds in apocytochrome c; following this reduction heme can be covalently attached. The chain is Thiol-disulfide oxidoreductase ResA from Bacillus thuringiensis (strain Al Hakam).